A 222-amino-acid chain; its full sequence is Small ribosomal subunit protein uS7m (222 aa).

The N-terminal 14 residues, 1-14 (MSKKLANFAQKRWI), are a transit peptide targeting the mitochondrion.

This sequence belongs to the universal ribosomal protein uS7 family. In terms of assembly, component of the mitochondrial ribosome small subunit (28S) which comprises a 12S rRNA and about 30 distinct proteins.

It localises to the mitochondrion. The protein is Small ribosomal subunit protein uS7m (mrps-7) of Caenorhabditis briggsae.